Consider the following 1051-residue polypeptide: Lateral signaling target protein 2 homolog (1051 aa).

Disordered regions lie at residues 305–440 (PLGS…DEDL), 516–552 (GSNA…PSTS), 566–703 (HLPS…NASS), and 837–968 (IDLA…DGKA). Positions 319–358 (NNTSSSTSNNNNNNNNNSSSSSSSSSGSGSNTAKTSTSST) are enriched in low complexity. Over residues 360–370 (KAVERLVDHRN) the composition is skewed to basic and acidic residues. The segment covering 371 to 391 (NNSSTVAGATQPSTARSPSML) has biased composition (polar residues). Composition is skewed to low complexity over residues 392–401 (SLSAGSTPTA) and 409–428 (PSHS…NPPA). Residues 518–528 (NAATERQQQQQ) show a composition bias toward polar residues. 2 stretches are compositionally biased toward low complexity: residues 533 to 549 (LQPG…QDEP) and 568 to 582 (PSSS…SSNQ). Phosphoserine is present on residues Ser569 and Ser570. The segment covering 583–596 (QTTIKTPNGNQSMP) has biased composition (polar residues). A compositionally biased stretch (low complexity) spans 597 to 606 (NSSSSSSNHN). Composition is skewed to basic residues over residues 607 to 637 (NNRH…HPHH) and 650 to 672 (HHHH…ARKR). Residues 692–703 (TPGSADTSNASS) are compositionally biased toward polar residues. Over residues 840-852 (ASGNNNGNSNAAA) the composition is skewed to low complexity. Phosphoserine is present on Ser861. 2 stretches are compositionally biased toward low complexity: residues 879–924 (QQQQ…SPIS) and 937–960 (SSIG…MSPP). Residues 965 to 1025 (DGKAPRCMSC…VCRECYVREV (61 aa)) form an FYVE-type zinc finger. The Zn(2+) site is built by Cys971, Cys974, Cys987, Cys990, Cys995, Cys998, Cys1017, and Cys1020. Residues 1028-1051 (SRQAPAQPSQAHGQASRPQAASAS) form a disordered region.

The protein belongs to the lst-2 family.

In terms of biological role, negative regulator of epidermal growth factor receptor (EGFR) signaling. The protein is Lateral signaling target protein 2 homolog of Drosophila mojavensis (Fruit fly).